Reading from the N-terminus, the 316-residue chain is Beta-ketoacyl-[acyl-carrier-protein] synthase III (316 aa).

Active-site residues include C112 and H243. The interval 244–248 (QANIR) is ACP-binding. N273 is a catalytic residue.

This sequence belongs to the thiolase-like superfamily. FabH family. Homodimer.

It is found in the cytoplasm. It carries out the reaction malonyl-[ACP] + acetyl-CoA + H(+) = 3-oxobutanoyl-[ACP] + CO2 + CoA. Its pathway is lipid metabolism; fatty acid biosynthesis. Its function is as follows. Catalyzes the condensation reaction of fatty acid synthesis by the addition to an acyl acceptor of two carbons from malonyl-ACP. Catalyzes the first condensation reaction which initiates fatty acid synthesis and may therefore play a role in governing the total rate of fatty acid production. Possesses both acetoacetyl-ACP synthase and acetyl transacylase activities. Its substrate specificity determines the biosynthesis of branched-chain and/or straight-chain of fatty acids. In Haemophilus ducreyi (strain 35000HP / ATCC 700724), this protein is Beta-ketoacyl-[acyl-carrier-protein] synthase III.